We begin with the raw amino-acid sequence, 710 residues long: Solute carrier organic anion transporter family member 3A1 (710 aa).

M1 carries the N-acetylmethionine modification. The span at 1-15 (MQGKKPGGSSGGGRS) shows a compositional bias: gly residues. A disordered region spans residues 1–25 (MQGKKPGGSSGGGRSGELQGDEAQR). Topologically, residues 1–40 (MQGKKPGGSSGGGRSGELQGDEAQRNKKKKKKVSCFSNIK) are cytoplasmic. Residues 41–60 (IFLVSECALMLAQGTVGAYL) form a helical membrane-spanning segment. Residues 61 to 79 (VSVLTTLERRFNLQSADVG) lie on the Extracellular side of the membrane. Residues 80-100 (VIASSFEIGNLALILFVSYFG) form a helical membrane-spanning segment. The Cytoplasmic portion of the chain corresponds to 101-106 (ARGHRP). Residues 107–131 (RLIGCGGIVMALGALLSALPEFLTH) traverse the membrane as a helical segment. The Extracellular portion of the chain corresponds to 132–174 (QYKYEAGEIRWGAEGRDVCAANGSGGDEGPDPDLICRNRTATN). Residues N153 and N169 are each glycosylated (N-linked (GlcNAc...) asparagine). A helical membrane pass occupies residues 175-203 (MMYLLLIGAQVLLGIGATPVQPLGVSYID). Residues 204-222 (DHVRRKDSSLYIGILFTML) are Cytoplasmic-facing. A helical transmembrane segment spans residues 223-243 (VFGPACGFILGSFCTKIYVDA). At 244-261 (VFIDTSNLDITPDDPRWI) the chain is on the extracellular side. The chain crosses the membrane as a helical span at residues 262 to 286 (GAWWGGFLLCGALLFFSSLLMFGFP). The Cytoplasmic segment spans residues 287 to 344 (QSLPPHSEPAMESEQAMLSEREYERPKPSNGVLRHPLEPDSSASCFQQLRVIPKVTKH). The chain crosses the membrane as a helical span at residues 345-366 (LLSNPVFTCIILAACMEIAVVA). Topologically, residues 367–386 (GFAAFLGKYLEQQFNLTTSS) are extracellular. N-linked (GlcNAc...) asparagine glycosylation occurs at N381. A helical membrane pass occupies residues 387–410 (ANQLLGMTAIPCACLGIFLGGLLV). Residues 411-414 (KKLS) are Cytoplasmic-facing. Residues 415 to 438 (LSALGAIRMAMLVNLVSTACYVSF) form a helical membrane-spanning segment. Topologically, residues 439 to 539 (LFLGCDTGPV…PGCQEAFLTF (101 aa)) are extracellular. Residue N457 is glycosylated (N-linked (GlcNAc...) asparagine). The region spanning 465–513 (LDPYSPCNNNCECQTDSFTPVCGADGITYLSACFAGCNSTNLTGCACLT) is the Kazal-like domain. Disulfide bonds link C471-C501, C477-C497, and C486-C511. N-linked (GlcNAc...) asparagine glycosylation is found at N502, N505, and N519. Residues 540–562 (LCVMCICSLIGAMAQTPSVIILI) traverse the membrane as a helical segment. The Cytoplasmic segment spans residues 563 to 571 (RTVSPELKS). The chain crosses the membrane as a helical span at residues 572–597 (YALGVLFLLLRLLGFIPPPLIFGAGI). The Extracellular portion of the chain corresponds to 598-630 (DSTCLFWSTFCGEQGACVLYDNVVYRYLYVSIA). The chain crosses the membrane as a helical span at residues 631 to 648 (IALKSFAFILYTTTWQCL). Residues 649-705 (RKNYKRYIKNHEGGLSTSEFFASTLTLDNLGRDPVPANQTHRTKFIYNLEDHEWCEN) are Cytoplasmic-facing.

This sequence belongs to the organo anion transporter (TC 2.A.60) family. As to expression, generally the expression of isoform 1 is higher than that of isoform 2. Expressed in placental trophoblasts. Expressed in pancreas, kidney, liver, lung, brain, heart, cerebellum, peripheral blood leukocyte, colon, small intestine, ovary, testis, prostate, thyroid, thymus and spleen. Expressed in fetal brain, heart, kidney, liver, lung, skeletal muscle, spleen and pancreas. In testis, detected in spermatogonia at different stages and absent from Sertoli cells. Expressed in the choroid plexus epithelium, at the basolateral membrane. In brain, also very abundant in the gray matter of the frontal cortex, but not associated with neuronal cell bodies. Not detected in the white matter. In terms of tissue distribution, expressed in heart, brain, cerebellum, testis, lung, thyroid, spoleen and liver. In testis, primarily localized to the basal membrane of Sertoli cells and weakly expressed within the tubules. In testis, also present in spermatogonia at different stages. In brain, expressed in the choroid plexus epithelium, at the apical membrane as well as in the subapical intracellular vesicular compartments. In brain, also associated with neuronal bodies and axons in both the gray and the white matters of the frontal cortex.

The protein resides in the basolateral cell membrane. It localises to the apical cell membrane. It is found in the basal cell membrane. It carries out the reaction L-thyroxine(out) = L-thyroxine(in). The catalysed reaction is prostaglandin E1(out) = prostaglandin E1(in). The enzyme catalyses prostaglandin E2(out) = prostaglandin E2(in). It catalyses the reaction prostaglandin F2alpha(out) = prostaglandin F2alpha(in). It carries out the reaction (5Z,8Z,11Z,14Z)-eicosatetraenoate(out) = (5Z,8Z,11Z,14Z)-eicosatetraenoate(in). The catalysed reaction is taurocholate(out) = taurocholate(in). The enzyme catalyses glycocholate(out) = glycocholate(in). It catalyses the reaction estrone 3-sulfate(out) = estrone 3-sulfate(in). It carries out the reaction argipressin(out) = argipressin(in). With respect to regulation, stimulated by extracellular acidic pH. Its function is as follows. Putative organic anion antiporter with apparent broad substrate specificity. Recognizes various substrates including thyroid hormone L-thyroxine, prostanoids such as prostaglandin E1 and E2, bile acids such as taurocholate, glycolate and glycochenodeoxycholate and peptide hormones such as L-arginine vasopressin, likely operating in a tissue-specific manner. The transport mechanism, its electrogenicity and potential tissue-specific counterions remain to be elucidated. This chain is Solute carrier organic anion transporter family member 3A1 (SLCO3A1), found in Homo sapiens (Human).